Consider the following 352-residue polypeptide: Mannonate dehydratase (352 aa).

It belongs to the mannonate dehydratase family. Fe(2+) is required as a cofactor. Requires Mn(2+) as cofactor.

It carries out the reaction D-mannonate = 2-dehydro-3-deoxy-D-gluconate + H2O. It functions in the pathway carbohydrate metabolism; pentose and glucuronate interconversion. Catalyzes the dehydration of D-mannonate. The chain is Mannonate dehydratase from Paraburkholderia phytofirmans (strain DSM 17436 / LMG 22146 / PsJN) (Burkholderia phytofirmans).